The sequence spans 191 residues: Large ribosomal subunit protein uL5 (191 aa).

Belongs to the universal ribosomal protein uL5 family. As to quaternary structure, part of the 50S ribosomal subunit; part of the 5S rRNA/L5/L18/L25 subcomplex. Contacts the 5S rRNA and the P site tRNA. Forms a bridge to the 30S subunit in the 70S ribosome.

This is one of the proteins that bind and probably mediate the attachment of the 5S RNA into the large ribosomal subunit, where it forms part of the central protuberance. In the 70S ribosome it contacts protein S13 of the 30S subunit (bridge B1b), connecting the 2 subunits; this bridge is implicated in subunit movement. Contacts the P site tRNA; the 5S rRNA and some of its associated proteins might help stabilize positioning of ribosome-bound tRNAs. The chain is Large ribosomal subunit protein uL5 from Micrococcus luteus (Micrococcus lysodeikticus).